The primary structure comprises 333 residues: NADH-quinone oxidoreductase subunit H (333 aa).

8 helical membrane passes run 15 to 35 (IALF…FVTY), 88 to 108 (YVLA…VLPF), 117 to 137 (IGVG…GVVA), 165 to 185 (LVMS…VDIV), 191 to 211 (VWFI…AVAE), 241 to 261 (FFML…TILF), 274 to 294 (IPGA…LIWF), and 313 to 333 (VLLP…AWFF).

It belongs to the complex I subunit 1 family. NDH-1 is composed of 14 different subunits. Subunits NuoA, H, J, K, L, M, N constitute the membrane sector of the complex.

The protein localises to the cell membrane. It catalyses the reaction a quinone + NADH + 5 H(+)(in) = a quinol + NAD(+) + 4 H(+)(out). In terms of biological role, NDH-1 shuttles electrons from NADH, via FMN and iron-sulfur (Fe-S) centers, to quinones in the respiratory chain. The immediate electron acceptor for the enzyme in this species is believed to be ubiquinone. Couples the redox reaction to proton translocation (for every two electrons transferred, four hydrogen ions are translocated across the cytoplasmic membrane), and thus conserves the redox energy in a proton gradient. This subunit may bind ubiquinone. In Geobacillus kaustophilus (strain HTA426), this protein is NADH-quinone oxidoreductase subunit H.